Reading from the N-terminus, the 103-residue chain is Transcription factor S (103 aa).

Zn(2+) contacts are provided by Cys-4, Cys-7, Cys-20, Cys-23, Cys-64, Cys-67, Cys-92, and Cys-95. Residues 4–23 (CPKCKSLMIYQGDKLVCRKC) form a C4-type zinc finger. A TFIIS-type zinc finger spans residues 60 to 100 (TKAICPACGHNEAFWWLRQLRAADESEVRFFRCTKCGKTWR).

Belongs to the archaeal RpoM/eukaryotic RPA12/RPB9/RPC11 RNA polymerase family.

In terms of biological role, induces RNA cleavage activity in the RNA polymerase. In its presence, the cleavage activity of the RNA polymerase truncates the RNA back to position +15 in a stepwise manner by releasing mainly dinucleotides from the 3'-end of the nascent RNA. The truncated RNAs are able to continue elongation. Involved in transcriptional proofreading and fidelity. Misincorporation of nucleotides during elongation of transcription leads to arrested elongation complexes which are rescued by TFS-promoted removal of a dinucleotide from the 3'-end. TFS is able to induce a cleavage resynthesis cycle in stalled elongation complexes (resulting from the next missing nucleotide or a reduced incorporation rate of a wrong nucleotide) preventing misincorporation and enabling proofreading in a post-incorporation manner. Pausing of elongation complexes is the main determinant of TFS-induced RNA cleavage. This is Transcription factor S from Archaeoglobus fulgidus (strain ATCC 49558 / DSM 4304 / JCM 9628 / NBRC 100126 / VC-16).